Here is a 277-residue protein sequence, read N- to C-terminus: Large ribosomal subunit protein uL2 (277 aa).

Disordered stretches follow at residues 35–60 and 225–277; these read EKQS…GHKQ and MNPV…ANKR. Residues 43-53 are compositionally biased toward polar residues; the sequence is RNNNGHITTRH.

It belongs to the universal ribosomal protein uL2 family. As to quaternary structure, part of the 50S ribosomal subunit. Forms a bridge to the 30S subunit in the 70S ribosome.

Its function is as follows. One of the primary rRNA binding proteins. Required for association of the 30S and 50S subunits to form the 70S ribosome, for tRNA binding and peptide bond formation. It has been suggested to have peptidyltransferase activity; this is somewhat controversial. Makes several contacts with the 16S rRNA in the 70S ribosome. This Methylobacillus flagellatus (strain ATCC 51484 / DSM 6875 / VKM B-1610 / KT) protein is Large ribosomal subunit protein uL2.